The sequence spans 756 residues: NUT family member 2F (756 aa).

4 disordered regions span residues 173-200 (GNARPWPQGAHGEGSLAPSQAKARPDDS), 293-438 (IQKS…TSDP), 511-639 (RAAP…LPGM), and 653-756 (RLSQ…HCSQ). Residues 304 to 321 (SLPPPAPPRLEPRGPPAP) are compositionally biased toward pro residues. Over residues 417 to 427 (EGQREKGKVEQ) the composition is skewed to basic and acidic residues. The span at 543–560 (QRVSVETSPPQTAAQDPQ) shows a compositional bias: polar residues. Positions 654-665 (LSQSPVPSSGLL) are enriched in low complexity. The span at 746–756 (SRRKKKRHCSQ) shows a compositional bias: basic residues.

It belongs to the NUT family.

This is NUT family member 2F (NUTM2F) from Homo sapiens (Human).